Consider the following 295-residue polypeptide: MTNVTGTERVKRGMAEMQKGGVIMDVINAEQAKIAEEAGAVAIMALERVPADIRAAGGVSRMADPTIVEEVMGAVSIPVMAKCRIGHLVEARVLESLGVDYIDESEVLTPADEVYHLNKRDYTVPFVCGCRDIGEAARRIAEGASMLRTKGEPGTGNIVEAVRHMRQVNAEIRQVASLREDELMTYAKNTGAPYEVLLEIKRLGRLPVVNFAAGGVATPADAALMMQLGADGVFVGSGIFKSENPAKFARAIVEATTHYEDYELIASLSKGLGNAMKGIEISTLLPEQRMQERGW.

Aspartate 25 lines the D-ribose 5-phosphate pocket. Catalysis depends on lysine 82, which acts as the Schiff-base intermediate with D-ribose 5-phosphate. Glycine 154 provides a ligand contact to D-ribose 5-phosphate. D-glyceraldehyde 3-phosphate is bound at residue arginine 166. D-ribose 5-phosphate contacts are provided by residues glycine 215 and 236-237 (GS).

Belongs to the PdxS/SNZ family. In terms of assembly, in the presence of PdxT, forms a dodecamer of heterodimers.

The catalysed reaction is aldehydo-D-ribose 5-phosphate + D-glyceraldehyde 3-phosphate + L-glutamine = pyridoxal 5'-phosphate + L-glutamate + phosphate + 3 H2O + H(+). The protein operates within cofactor biosynthesis; pyridoxal 5'-phosphate biosynthesis. Its function is as follows. Catalyzes the formation of pyridoxal 5'-phosphate from ribose 5-phosphate (RBP), glyceraldehyde 3-phosphate (G3P) and ammonia. The ammonia is provided by the PdxT subunit. Can also use ribulose 5-phosphate and dihydroxyacetone phosphate as substrates, resulting from enzyme-catalyzed isomerization of RBP and G3P, respectively. The protein is Pyridoxal 5'-phosphate synthase subunit PdxS of Bacillus anthracis (strain A0248).